Consider the following 135-residue polypeptide: Holo-[acyl-carrier-protein] synthase (135 aa).

Residues Asp8 and Glu57 each contribute to the Mg(2+) site.

Belongs to the P-Pant transferase superfamily. AcpS family. It depends on Mg(2+) as a cofactor.

It localises to the cytoplasm. The enzyme catalyses apo-[ACP] + CoA = holo-[ACP] + adenosine 3',5'-bisphosphate + H(+). Transfers the 4'-phosphopantetheine moiety from coenzyme A to a Ser of acyl-carrier-protein. The sequence is that of Holo-[acyl-carrier-protein] synthase from Methylobacterium sp. (strain 4-46).